The following is a 369-amino-acid chain: MASELAMSGSDLPTSPLAMEYVNDFDLMKFEVKKEPVETDRIISQCGRLIAGGSLSSTPMSTPCSSVPPSPSFSAPSPGSGTDQKTHLEDYYWMTGYPQQLNPEALGFSPEDAVEALINSSHHPLPGAFDGYARGQQLAAAAGGSVPAEEMGSAAAVVSAVIAAAAAQGGAPHYHHHHHHPHHGGGGGGGGHPHGAAPGSAPPSSASSSAAGSGGGGGGGGGGAGGLHHPHHGGGGGGGGLHFDDRFSDEQLVTMSMRELNRQLRGVSKEEVIRLKQKRRTLKNRGYAQSCRFKRVQQRHVLESEKNQLLQQVEHLKQEISRLVRERDAYKEKYEKLVSNGFRENGSSSDNPSSPEFFMYPRESSTTVM.

Disordered stretches follow at residues 57–85 and 169–243; these read STPM…TDQK and GGAP…GLHF. The span at 173 to 183 shows a compositional bias: basic residues; that stretch reads HYHHHHHHPHH. Positions 184 to 193 are enriched in gly residues; it reads GGGGGGGGHP. Low complexity predominate over residues 194–211; sequence HGAAPGSAPPSSASSSAA. The segment covering 212-226 has biased composition (gly residues); the sequence is GSGGGGGGGGGGAGG. The basic motif stretch occupies residues 274–299; it reads RLKQKRRTLKNRGYAQSCRFKRVQQR. In terms of domain architecture, bZIP spans 274-337; the sequence is RLKQKRRTLK…DAYKEKYEKL (64 aa). A leucine-zipper region spans residues 302–323; the sequence is LESEKNQLLQQVEHLKQEISRL. The tract at residues 341–369 is disordered; the sequence is GFRENGSSSDNPSSPEFFMYPRESSTTVM. The span at 345–354 shows a compositional bias: polar residues; sequence NGSSSDNPSS.

This sequence belongs to the bZIP family. Maf subfamily.

It localises to the host nucleus. Functionally, might be a transcriptional trans-activator. The polypeptide is Transforming protein Maf (V-MAF) (Galliformes).